A 59-amino-acid polypeptide reads, in one-letter code: DNA gyrase inhibitor YacG (59 aa).

Zn(2+)-binding residues include Cys-7, Cys-10, Cys-25, and Cys-29.

This sequence belongs to the DNA gyrase inhibitor YacG family. Interacts with GyrB. Requires Zn(2+) as cofactor.

In terms of biological role, inhibits all the catalytic activities of DNA gyrase by preventing its interaction with DNA. Acts by binding directly to the C-terminal domain of GyrB, which probably disrupts DNA binding by the gyrase. This chain is DNA gyrase inhibitor YacG, found in Geobacter sulfurreducens (strain ATCC 51573 / DSM 12127 / PCA).